The primary structure comprises 457 residues: Siroheme synthase (457 aa).

Residues 1–204 (MDHLPIFCQL…NDQKAITETT (204 aa)) form a precorrin-2 dehydrogenase /sirohydrochlorin ferrochelatase region. Residues 22 to 23 (DV) and 43 to 44 (LA) contribute to the NAD(+) site. Residue Ser128 is modified to Phosphoserine. The interval 216-457 (GEVVLVGAGP…RDKLNWFSNH (242 aa)) is uroporphyrinogen-III C-methyltransferase. Pro225 contacts S-adenosyl-L-methionine. Asp248 functions as the Proton acceptor in the catalytic mechanism. Lys270 functions as the Proton donor in the catalytic mechanism. S-adenosyl-L-methionine-binding positions include 301-303 (GGD), Ile306, 331-332 (TA), Met382, and Gly411.

It in the N-terminal section; belongs to the precorrin-2 dehydrogenase / sirohydrochlorin ferrochelatase family. The protein in the C-terminal section; belongs to the precorrin methyltransferase family.

The catalysed reaction is uroporphyrinogen III + 2 S-adenosyl-L-methionine = precorrin-2 + 2 S-adenosyl-L-homocysteine + H(+). It carries out the reaction precorrin-2 + NAD(+) = sirohydrochlorin + NADH + 2 H(+). The enzyme catalyses siroheme + 2 H(+) = sirohydrochlorin + Fe(2+). It participates in cofactor biosynthesis; adenosylcobalamin biosynthesis; precorrin-2 from uroporphyrinogen III: step 1/1. It functions in the pathway cofactor biosynthesis; adenosylcobalamin biosynthesis; sirohydrochlorin from precorrin-2: step 1/1. Its pathway is porphyrin-containing compound metabolism; siroheme biosynthesis; precorrin-2 from uroporphyrinogen III: step 1/1. The protein operates within porphyrin-containing compound metabolism; siroheme biosynthesis; siroheme from sirohydrochlorin: step 1/1. It participates in porphyrin-containing compound metabolism; siroheme biosynthesis; sirohydrochlorin from precorrin-2: step 1/1. Functionally, multifunctional enzyme that catalyzes the SAM-dependent methylations of uroporphyrinogen III at position C-2 and C-7 to form precorrin-2 via precorrin-1. Then it catalyzes the NAD-dependent ring dehydrogenation of precorrin-2 to yield sirohydrochlorin. Finally, it catalyzes the ferrochelation of sirohydrochlorin to yield siroheme. The polypeptide is Siroheme synthase (Escherichia coli O17:K52:H18 (strain UMN026 / ExPEC)).